A 301-amino-acid chain; its full sequence is Mitochondrial carnitine/acylcarnitine carrier protein (301 aa).

Alanine 2 carries the post-translational modification N-acetylalanine. Residues alanine 2–lysine 12 are Cytoplasmic-facing. Solcar repeat units lie at residues isoleucine 8–leucine 99, leucine 108–leucine 196, and leucine 207–phenylalanine 293. Residues asparagine 13–leucine 31 form a helical membrane-spanning segment. Topologically, residues aspartate 32–arginine 73 are mitochondrial matrix. The helical transmembrane segment at glycine 74–phenylalanine 93 threads the bilayer. Topologically, residues glycine 94–glutamine 112 are cytoplasmic. The helical transmembrane segment at leucine 113–glycine 131 threads the bilayer. The Mitochondrial matrix portion of the chain corresponds to glutamate 132–lysine 170. Residues lysine 148 and lysine 157 each carry the N6-acetyllysine modification. Position 170 is an N6-acetyllysine; alternate (lysine 170). Lysine 170 carries the post-translational modification N6-succinyllysine; alternate. The helical transmembrane segment at glycine 171–tyrosine 190 threads the bilayer. Residues glutamate 191 to arginine 211 lie on the Cytoplasmic side of the membrane. The chain crosses the membrane as a helical span at residues isoleucine 212–proline 230. Residues aspartate 231–lysine 267 lie on the Mitochondrial matrix side of the membrane. A helical membrane pass occupies residues glycine 268–phenylalanine 287. The Cytoplasmic segment spans residues glutamate 288–leucine 301.

It belongs to the mitochondrial carrier (TC 2.A.29) family. In terms of tissue distribution, widely expressed, with highest levels in the liver, intermediate levels in heart, testis and kidney and low levels in brain, including cortex, cerebellum, hippocampus and hypothalamus.

The protein resides in the mitochondrion inner membrane. It carries out the reaction O-acetyl-(R)-carnitine(in) + (R)-carnitine(out) = O-acetyl-(R)-carnitine(out) + (R)-carnitine(in). It catalyses the reaction an O-acyl-(R)-carnitine(in) + (R)-carnitine(out) = an O-acyl-(R)-carnitine(out) + (R)-carnitine(in). The enzyme catalyses O-propanoyl-(R)-carnitine(in) + (R)-carnitine(out) = O-propanoyl-(R)-carnitine(out) + (R)-carnitine(in). The catalysed reaction is O-hexadecanoyl-(R)-carnitine(in) + (R)-carnitine(out) = O-hexadecanoyl-(R)-carnitine(out) + (R)-carnitine(in). It carries out the reaction O-octanoyl-(R)-carnitine(in) + (R)-carnitine(out) = O-octanoyl-(R)-carnitine(out) + (R)-carnitine(in). It catalyses the reaction (R)-carnitine(in) = (R)-carnitine(out). Functionally, mediates the electroneutral exchange of acylcarnitines (O-acyl-(R)-carnitine or L-acylcarnitine) of different acyl chain lengths (ranging from O-acetyl-(R)-carnitine to long-chain O-acyl-(R)-carnitines) with free carnitine ((R)-carnitine or L-carnitine) across the mitochondrial inner membrane, via a ping-pong mechanism. Key player in the mitochondrial oxidation pathway, it translocates the fatty acids in the form of acylcarnitines into the mitochondrial matrix, where the carnitine palmitoyltransferase 2 (CPT-2) activates them to undergo fatty acid beta-oxidation. Catalyzes the unidirectional transport (uniport) of carnitine at lower rates than the antiport (exchange). The polypeptide is Mitochondrial carnitine/acylcarnitine carrier protein (Mus musculus (Mouse)).